Reading from the N-terminus, the 323-residue chain is Annexin A3 (323 aa).

An N-acetylalanine modification is found at A2. Annexin repeat units follow at residues 18–89 (FNPS…ALVT), 90–161 (PPAV…ILAN), 173–245 (QLAR…AIVR), and 249–320 (NTPA…KICG). At K177 the chain carries N6-acetyllysine. Residue T267 is modified to Phosphothreonine.

Belongs to the annexin family.

Functionally, inhibitor of phospholipase A2, also possesses anti-coagulant properties. Also cleaves the cyclic bond of inositol 1,2-cyclic phosphate to form inositol 1-phosphate. This is Annexin A3 (ANXA3) from Bos taurus (Bovine).